The sequence spans 452 residues: Methionine aminopeptidase 2 (452 aa).

The tract at residues 1 to 96 (MAVQALPEIN…VPLSTLFPNN (96 aa)) is disordered. Residues 18–35 (GAANAAAKGQAAQGTAGN) are compositionally biased toward low complexity. Positions 36 to 53 (DDAENDESDEDKEDEQEV) are enriched in acidic residues. Residues 62 to 77 (GKKKKKKTKKKKKKGT) are compositionally biased toward basic residues. Histidine 202 lines the substrate pocket. A divalent metal cation contacts are provided by aspartate 222, aspartate 233, and histidine 302. Residue histidine 310 coordinates substrate. Positions 338 and 433 each coordinate a divalent metal cation.

This sequence belongs to the peptidase M24A family. Methionine aminopeptidase eukaryotic type 2 subfamily. Co(2+) serves as cofactor. Zn(2+) is required as a cofactor. The cofactor is Mn(2+). It depends on Fe(2+) as a cofactor.

The protein localises to the cytoplasm. It catalyses the reaction Release of N-terminal amino acids, preferentially methionine, from peptides and arylamides.. Cotranslationally removes the N-terminal methionine from nascent proteins. The N-terminal methionine is often cleaved when the second residue in the primary sequence is small and uncharged (Met-Ala-, Cys, Gly, Pro, Ser, Thr, or Val). This is Methionine aminopeptidase 2 from Coccidioides posadasii (strain C735) (Valley fever fungus).